A 111-amino-acid polypeptide reads, in one-letter code: Ribonuclease P protein component (111 aa).

Belongs to the RnpA family. As to quaternary structure, consists of a catalytic RNA component (M1 or rnpB) and a protein subunit.

It catalyses the reaction Endonucleolytic cleavage of RNA, removing 5'-extranucleotides from tRNA precursor.. RNaseP catalyzes the removal of the 5'-leader sequence from pre-tRNA to produce the mature 5'-terminus. It can also cleave other RNA substrates such as 4.5S RNA. The protein component plays an auxiliary but essential role in vivo by binding to the 5'-leader sequence and broadening the substrate specificity of the ribozyme. In Mycoplasmopsis pulmonis (strain UAB CTIP) (Mycoplasma pulmonis), this protein is Ribonuclease P protein component.